The sequence spans 70 residues: DNA-directed RNA polymerase subunit omega (70 aa).

The protein belongs to the RNA polymerase subunit omega family. The RNAP catalytic core consists of 2 alpha, 1 beta, 1 beta' and 1 omega subunit. When a sigma factor is associated with the core the holoenzyme is formed, which can initiate transcription.

It catalyses the reaction RNA(n) + a ribonucleoside 5'-triphosphate = RNA(n+1) + diphosphate. Its function is as follows. Promotes RNA polymerase assembly. Latches the N- and C-terminal regions of the beta' subunit thereby facilitating its interaction with the beta and alpha subunits. This chain is DNA-directed RNA polymerase subunit omega, found in Nitratiruptor sp. (strain SB155-2).